The primary structure comprises 803 residues: PR domain zinc finger protein 4 (803 aa).

An SET domain is found at 408-532; that stretch reads KQLVLRQSIV…PESELLFYYS (125 aa). C2H2-type zinc fingers lie at residues 593–615, 621–643, 649–671, 677–699, and 705–727; these read WKCS…FMGH, HKCD…LKIH, YRCT…MVIH, LKCD…VLIH, and IKCP…LNSH. The C2H2-type 6; degenerate zinc-finger motif lies at 733 to 755; it reads YVCEKCTKAYLTKYHLTRHLKTC. The interval 757-803 is disordered; it reads EPSSSSSAQEEEDDESEEEDLADSMRTEDCRMGSAVYSTDESLSAHK. Acidic residues predominate over residues 765-778; sequence QEEEDDESEEEDLA. Residues 792–803 show a composition bias toward polar residues; the sequence is VYSTDESLSAHK.

Belongs to the class V-like SAM-binding methyltransferase superfamily.

The protein resides in the nucleus. In terms of biological role, may function as a transcription factor involved in cell differentiation. The protein is PR domain zinc finger protein 4 (Prdm4) of Mus musculus (Mouse).